The sequence spans 302 residues: MFSKKNLKWLSVLATVIMAFVQLGGALVTKTGSADGCGSDWPLCHGAFLPQNLPIQTLIELSHRAVSGLSLIVVLWLVIVAWKHIGYIKEVKPLSCISVGFLLIQALVGAAAVMWQQNAYVLALHFGISLISFSSVFVLTLIIYEVDRKYEADELFIRKPLRIYTWIMALIVYMTIYTGALVRHKEASLAYGQWPLPFNDLMPHNVQDWVNLTHRGMALIAFIWILITFIHAVNNYRENRTIRYGYTAAFILVILQVTTGALSIITEVNLFIALLHALFITLLFGLIAYFIILMLRTIRSGG.

Residues 1–8 lie on the Cytoplasmic side of the membrane; it reads MFSKKNLK. The chain crosses the membrane as a helical span at residues 9 to 29; sequence WLSVLATVIMAFVQLGGALVT. At 30 to 67 the chain is on the extracellular side; it reads KTGSADGCGSDWPLCHGAFLPQNLPIQTLIELSHRAVS. A disulfide bridge links cysteine 37 with cysteine 44. Residue glutamate 60 is part of the active site. Heme o is bound at residue histidine 63. A helical membrane pass occupies residues 68-88; sequence GLSLIVVLWLVIVAWKHIGYI. Residues 89-93 are Cytoplasmic-facing; it reads KEVKP. Residues 94-114 form a helical membrane-spanning segment; sequence LSCISVGFLLIQALVGAAAVM. The Extracellular portion of the chain corresponds to 115-122; that stretch reads WQQNAYVL. The chain crosses the membrane as a helical span at residues 123-143; it reads ALHFGISLISFSSVFVLTLII. Histidine 125 serves as a coordination point for heme o. The Cytoplasmic portion of the chain corresponds to 144–161; sequence YEVDRKYEADELFIRKPL. Residues 162-182 traverse the membrane as a helical segment; the sequence is RIYTWIMALIVYMTIYTGALV. Residues 183–215 lie on the Extracellular side of the membrane; the sequence is RHKEASLAYGQWPLPFNDLMPHNVQDWVNLTHR. Residue histidine 214 coordinates heme b. The chain crosses the membrane as a helical span at residues 216–236; the sequence is GMALIAFIWILITFIHAVNNY. Topologically, residues 237-244 are cytoplasmic; that stretch reads RENRTIRY. Residues 245–265 form a helical membrane-spanning segment; it reads GYTAAFILVILQVTTGALSII. Residues 266–271 lie on the Extracellular side of the membrane; it reads TEVNLF. The helical transmembrane segment at 272–292 threads the bilayer; sequence IALLHALFITLLFGLIAYFII. Histidine 276 is a heme b binding site. The Cytoplasmic portion of the chain corresponds to 293–302; sequence LMLRTIRSGG.

This sequence belongs to the COX15/CtaA family. Type 1 subfamily. In terms of assembly, interacts with CtaB. It depends on heme b as a cofactor.

It localises to the cell membrane. The enzyme catalyses Fe(II)-heme o + 2 A + H2O = Fe(II)-heme a + 2 AH2. It participates in porphyrin-containing compound metabolism; heme A biosynthesis; heme A from heme O: step 1/1. Functionally, catalyzes the conversion of heme O to heme A by two successive hydroxylations of the methyl group at C8. The first hydroxylation forms heme I, the second hydroxylation results in an unstable dihydroxymethyl group, which spontaneously dehydrates, resulting in the formyl group of heme A. This Staphylococcus saprophyticus subsp. saprophyticus (strain ATCC 15305 / DSM 20229 / NCIMB 8711 / NCTC 7292 / S-41) protein is Heme A synthase.